The chain runs to 248 residues: Transcriptional activator protein FnrL (248 aa).

The 79-residue stretch at 154-232 folds into the HTH crp-type domain; that stretch reads KTAREKIASL…KRHVIVTDFA (79 aa). Residues 191–210 constitute a DNA-binding region (H-T-H motif); sequence REEMADYLGLTLETVSRQVS.

In terms of biological role, anaerobic regulatory protein; transcriptional activator of hemA. Appears to regulate other genes. The protein is Transcriptional activator protein FnrL (fnrL) of Cereibacter sphaeroides (strain ATCC 17023 / DSM 158 / JCM 6121 / CCUG 31486 / LMG 2827 / NBRC 12203 / NCIMB 8253 / ATH 2.4.1.) (Rhodobacter sphaeroides).